Here is a 182-residue protein sequence, read N- to C-terminus: Large ribosomal subunit protein uL5 (182 aa).

Belongs to the universal ribosomal protein uL5 family. In terms of assembly, part of the 50S ribosomal subunit; part of the 5S rRNA/L5/L18/L25 subcomplex. Contacts the 5S rRNA and the P site tRNA. Forms a bridge to the 30S subunit in the 70S ribosome.

In terms of biological role, this is one of the proteins that bind and probably mediate the attachment of the 5S RNA into the large ribosomal subunit, where it forms part of the central protuberance. In the 70S ribosome it contacts protein S13 of the 30S subunit (bridge B1b), connecting the 2 subunits; this bridge is implicated in subunit movement. Contacts the P site tRNA; the 5S rRNA and some of its associated proteins might help stabilize positioning of ribosome-bound tRNAs. This is Large ribosomal subunit protein uL5 from Nostoc punctiforme (strain ATCC 29133 / PCC 73102).